Consider the following 476-residue polypeptide: Serine/threonine-protein kinase Chk1 (476 aa).

A Protein kinase domain is found at 9 to 265 (WDLVQTLGEG…IPDIKKDRWY (257 aa)). ATP is bound by residues 15–23 (LGEGAYGEV) and lysine 38. Catalysis depends on aspartate 130, which acts as the Proton acceptor. Positions 272–329 (GTKRGRVSSGGVTESPGALPKHIRSDTDFSPVKSALGEDKASYSTSQPEPGTGGALWD) are disordered. Serine 280 bears the Phosphoserine; by PKB/AKT1 mark. Residue serine 296 is modified to Phosphoserine. At serine 317 the chain carries Phosphoserine; by ATM and ATR. Serine 345 bears the Phosphoserine mark. The tract at residues 391–476 (RSLRDVCEKM…STQKVWLPPP (86 aa)) is autoinhibitory region.

It belongs to the protein kinase superfamily. CAMK Ser/Thr protein kinase family. NIM1 subfamily. In terms of processing, phosphorylated by ATR in a RAD17-dependent manner in response to ultraviolet irradiation and inhibition of DNA replication. Phosphorylated by ATM in response to ionizing irradiation. Phosphorylation at Ser-345 induces a change in the conformation of the protein and activates the kinase activity. Phosphorylation at Ser-345 also increases binding to 14-3-3 proteins and promotes nuclear retention.

The protein resides in the nucleus. The protein localises to the chromosome. It localises to the cytoplasm. Its subcellular location is the cytoskeleton. It is found in the microtubule organizing center. The protein resides in the centrosome. It carries out the reaction L-seryl-[protein] + ATP = O-phospho-L-seryl-[protein] + ADP + H(+). The catalysed reaction is L-threonyl-[protein] + ATP = O-phospho-L-threonyl-[protein] + ADP + H(+). With respect to regulation, activated through phosphorylation by atr or atm in response to DNA damage or inhibition of DNA replication. Its function is as follows. Serine/threonine-protein kinase which is required for checkpoint-mediated cell cycle arrest and activation of DNA repair in response to the presence of DNA damage or unreplicated DNA. May also negatively regulate cell cycle progression during unperturbed cell cycles. This regulation is achieved by a number of mechanisms that together help to preserve the integrity of the genome. Recognizes the substrate consensus sequence [R-X-X-S/T]. Binds to and phosphorylates CDC25A, CDC25B and CDC25C. This inhibits their activity through proteasomal degradation, nucleo-cytoplasmic shuttling and inhibition by proteins of the 13-3-3 family. Inhibition of CDC25 leads to increased inhibitory tyrosine phosphorylation of CDK-cyclin complexes and blocks cell cycle progression. May promote DNA repair, regulate chromatin assembly and the transcription of genes that regulate cell-cycle progression. May also play a role in replication fork maintenance. This Gallus gallus (Chicken) protein is Serine/threonine-protein kinase Chk1 (CHEK1).